We begin with the raw amino-acid sequence, 204 residues long: bMERB domain-containing protein 1 (204 aa).

Residues 3–150 (LKQSLSTHLE…EQEEDKEMAD (148 aa)) enclose the bMERB domain. A disordered region spans residues 162-187 (VTKSPASSRAEKKAEPPPSKPTVAKT).

The chain is bMERB domain-containing protein 1 from Homo sapiens (Human).